The chain runs to 65 residues: Large ribosomal subunit protein bL35 (65 aa).

Belongs to the bacterial ribosomal protein bL35 family.

This Sorangium cellulosum (strain So ce56) (Polyangium cellulosum (strain So ce56)) protein is Large ribosomal subunit protein bL35.